Reading from the N-terminus, the 432-residue chain is Phosphomethylpyrimidine synthase (432 aa).

Substrate contacts are provided by residues asparagine 66, methionine 95, tyrosine 124, histidine 163, 185–187 (SRG), 226–229 (DGMR), and glutamate 265. Histidine 269 is a Zn(2+) binding site. Tyrosine 292 contacts substrate. Histidine 333 is a binding site for Zn(2+). [4Fe-4S] cluster contacts are provided by cysteine 409, cysteine 412, and cysteine 416.

This sequence belongs to the ThiC family. Requires [4Fe-4S] cluster as cofactor.

The catalysed reaction is 5-amino-1-(5-phospho-beta-D-ribosyl)imidazole + S-adenosyl-L-methionine = 4-amino-2-methyl-5-(phosphooxymethyl)pyrimidine + CO + 5'-deoxyadenosine + formate + L-methionine + 3 H(+). The protein operates within cofactor biosynthesis; thiamine diphosphate biosynthesis. Functionally, catalyzes the synthesis of the hydroxymethylpyrimidine phosphate (HMP-P) moiety of thiamine from aminoimidazole ribotide (AIR) in a radical S-adenosyl-L-methionine (SAM)-dependent reaction. This Desulforudis audaxviator (strain MP104C) protein is Phosphomethylpyrimidine synthase.